We begin with the raw amino-acid sequence, 382 residues long: D-galactonate dehydratase (382 aa).

Residue aspartate 183 participates in Mg(2+) binding. The active-site Proton donor is the histidine 185. Mg(2+) contacts are provided by glutamate 209 and glutamate 235. Histidine 285 (proton acceptor) is an active-site residue.

Belongs to the mandelate racemase/muconate lactonizing enzyme family. GalD subfamily. Mg(2+) is required as a cofactor.

The catalysed reaction is D-galactonate = 2-dehydro-3-deoxy-D-galactonate + H2O. It participates in carbohydrate acid metabolism; D-galactonate degradation; D-glyceraldehyde 3-phosphate and pyruvate from D-galactonate: step 1/3. In terms of biological role, catalyzes the dehydration of D-galactonate to 2-keto-3-deoxy-D-galactonate. The polypeptide is D-galactonate dehydratase (Escherichia fergusonii (strain ATCC 35469 / DSM 13698 / CCUG 18766 / IAM 14443 / JCM 21226 / LMG 7866 / NBRC 102419 / NCTC 12128 / CDC 0568-73)).